The sequence spans 166 residues: Large ribosomal subunit protein uL10 (166 aa).

The protein belongs to the universal ribosomal protein uL10 family. In terms of assembly, part of the ribosomal stalk of the 50S ribosomal subunit. The N-terminus interacts with L11 and the large rRNA to form the base of the stalk. The C-terminus forms an elongated spine to which L12 dimers bind in a sequential fashion forming a multimeric L10(L12)X complex.

Forms part of the ribosomal stalk, playing a central role in the interaction of the ribosome with GTP-bound translation factors. The chain is Large ribosomal subunit protein uL10 (rplJ) from Streptococcus pyogenes serotype M1.